We begin with the raw amino-acid sequence, 379 residues long: Putative 2-hydroxyacid dehydrogenase YGL185C (379 aa).

Residues 207 to 208 (SI), 291 to 293 (LGR), and Asp-317 contribute to the NAD(+) site. Arg-293 is a catalytic residue. Residue Glu-322 is part of the active site. The Proton donor role is filled by His-341. Residue 341 to 344 (HLGS) coordinates NAD(+).

This sequence belongs to the D-isomer specific 2-hydroxyacid dehydrogenase family.

The sequence is that of Putative 2-hydroxyacid dehydrogenase YGL185C from Saccharomyces cerevisiae (strain ATCC 204508 / S288c) (Baker's yeast).